A 644-amino-acid chain; its full sequence is DNA gyrase subunit B (644 aa).

Positions Cys429–Pro543 constitute a Toprim domain. The Mg(2+) site is built by Glu435, Asp508, and Asp510.

Belongs to the type II topoisomerase GyrB family. In terms of assembly, heterotetramer, composed of two GyrA and two GyrB chains. In the heterotetramer, GyrA contains the active site tyrosine that forms a transient covalent intermediate with DNA, while GyrB binds cofactors and catalyzes ATP hydrolysis. It depends on Mg(2+) as a cofactor. Requires Mn(2+) as cofactor. Ca(2+) serves as cofactor.

The protein localises to the cytoplasm. The enzyme catalyses ATP-dependent breakage, passage and rejoining of double-stranded DNA.. Its function is as follows. A type II topoisomerase that negatively supercoils closed circular double-stranded (ds) DNA in an ATP-dependent manner to modulate DNA topology and maintain chromosomes in an underwound state. Negative supercoiling favors strand separation, and DNA replication, transcription, recombination and repair, all of which involve strand separation. Also able to catalyze the interconversion of other topological isomers of dsDNA rings, including catenanes and knotted rings. Type II topoisomerases break and join 2 DNA strands simultaneously in an ATP-dependent manner. This chain is DNA gyrase subunit B, found in Staphylococcus aureus (strain COL).